A 155-amino-acid polypeptide reads, in one-letter code: Probable tellurium resistance transcriptional regulator TerW (155 aa).

Involved in tellurite resistance. TerW binds specifically to the potential promoter region of the terZABCDE operon and probably regulates expression of the genes. This chain is Probable tellurium resistance transcriptional regulator TerW, found in Escherichia coli.